A 459-amino-acid chain; its full sequence is Cysteine--tRNA ligase (459 aa).

Cys28 contributes to the Zn(2+) binding site. Residues 30-40 (VTVYDLCHFGH) carry the 'HIGH' region motif. The Zn(2+) site is built by Cys209, His234, and Glu238. Residues 266–270 (KMSKS) carry the 'KMSKS' region motif. Lys269 provides a ligand contact to ATP.

It belongs to the class-I aminoacyl-tRNA synthetase family. In terms of assembly, monomer. Zn(2+) serves as cofactor.

The protein localises to the cytoplasm. The catalysed reaction is tRNA(Cys) + L-cysteine + ATP = L-cysteinyl-tRNA(Cys) + AMP + diphosphate. In Actinobacillus pleuropneumoniae serotype 5b (strain L20), this protein is Cysteine--tRNA ligase.